The primary structure comprises 362 residues: Epoxyqueuosine reductase (362 aa).

Catalysis depends on aspartate 143, which acts as the Proton donor. In terms of domain architecture, 4Fe-4S ferredoxin-type spans 191-220 (PDSPKHQDSCGKCQACIKLCPTGAIQPGKM). Residues cysteine 200, cysteine 203, cysteine 206, cysteine 210, cysteine 226, cysteine 253, cysteine 256, and cysteine 260 each coordinate [4Fe-4S] cluster.

Belongs to the QueG family. Monomer. It depends on cob(II)alamin as a cofactor. Requires [4Fe-4S] cluster as cofactor.

Its subcellular location is the cytoplasm. It catalyses the reaction epoxyqueuosine(34) in tRNA + AH2 = queuosine(34) in tRNA + A + H2O. Its pathway is tRNA modification; tRNA-queuosine biosynthesis. In terms of biological role, catalyzes the conversion of epoxyqueuosine (oQ) to queuosine (Q), which is a hypermodified base found in the wobble positions of tRNA(Asp), tRNA(Asn), tRNA(His) and tRNA(Tyr). This is Epoxyqueuosine reductase from Francisella cf. novicida (strain Fx1).